A 2534-amino-acid chain; its full sequence is Highly reducing polyketide synthase easB (2534 aa).

The tract at residues 1-49 (MSPASRSRVEIADSESDSERLSSSPWSILSDNDSNTSDERSTRAGPGSL) is disordered. A Ketosynthase family 3 (KS3) domain is found at 49-470 (LEPIAVIGIG…GTNAHVIIDA (422 aa)). Catalysis depends on for beta-ketoacyl synthase activity residues Cys-222, His-356, and His-396. A malonyl-CoA:ACP transacylase (MAT) domain region spans residues 587 to 885 (IFSGQGAQYA…LSGPVNQILK (299 aa)). Residues 973-1111 (HELLGTLSAD…GLVQAEVDSV (139 aa)) are N-terminal hotdog fold. Residues 973-1273 (HELLGTLSAD…QGIRVTSLGG (301 aa)) form a dehydratase (DH) domain region. The region spanning 973-1277 (HELLGTLSAD…VTSLGGDVAA (305 aa)) is the PKS/mFAS DH domain. His-1005 serves as the catalytic Proton acceptor; for dehydratase activity. Residues 1131 to 1277 (THGTIPQKFY…VTSLGGDVAA (147 aa)) are C-terminal hotdog fold. The active-site Proton donor; for dehydratase activity is Asp-1193. The tract at residues 1395–1625 (KTSALSLLTK…VFISTAPFPR (231 aa)) is methyltransferase (CMet) domain. The segment at 1834 to 2146 (GLLETIRWKD…AGKHTGKIVL (313 aa)) is enoyl reductase (ER) domain. The Carrier domain occupies 2452–2529 (EAVHIVTNAI…QLAAIVAKES (78 aa)). The segment at 2453-2526 (AVHIVTNAIL…SISQLAAIVA (74 aa)) is ketoreductase (KR) domain. O-(pantetheine 4'-phosphoryl)serine is present on Ser-2489.

It participates in antibiotic biosynthesis. Its function is as follows. Polyketide synthase; part of the gene cluster that mediates the biosynthesis of emericellamides, secondary metabolites acting as antibiotics. The biosynthesis of emericellamides initiates from the highly reducing polyketide synthase easB which catalyzes the formation of the linear polyketide chain. EasB produces several polyketides that can be further processed by the downstream enzymes. The polyketides are released from easB as linear polyketide carboxylic acids, which are converted to CoA thioesters by the acyl-CoA ligase easD. The substrates are then loaded onto the acyltransferase easC, which shuttles them to the first thiolation (T) domain of the nonribosomal peptide synthetase easA. EasA then performs condensation of the polyketides with one glycine, two alanine, one valine and one leucine residues. A last step of cyclization leads to the production of emericellamides. This is Highly reducing polyketide synthase easB from Emericella nidulans (strain FGSC A4 / ATCC 38163 / CBS 112.46 / NRRL 194 / M139) (Aspergillus nidulans).